A 93-amino-acid chain; its full sequence is Large ribosomal subunit protein bL27 (93 aa).

Positions 1–9 (MLQLNLQFF) are excised as a propeptide. Residues 14–33 (GVGSTKNGRDSISKRLGAKR) are disordered.

It belongs to the bacterial ribosomal protein bL27 family. Post-translationally, the N-terminus is cleaved by ribosomal processing cysteine protease Prp.

The protein is Large ribosomal subunit protein bL27 of Exiguobacterium sp. (strain ATCC BAA-1283 / AT1b).